Reading from the N-terminus, the 174-residue chain is MPQIQSSHSNHFDFTIDTADRTKLLMSYLVVPTTANFNNVMHGGELLNLLDKVAYVCSTRYCAKGTVTLSVDGVTFKYPIPVGNLLTFLASINYVGNTSCEVGIKVLSEDIKTREITHTNSCYFTMVAVENGKPTPMPKYEPKTEVEIRRYEGALKRKEMRTRGYLKSGKHEGV.

The region spanning 20–132 is the HotDog ACOT-type domain; that stretch reads DRTKLLMSYL…YFTMVAVENG (113 aa).

Belongs to the acyl coenzyme A hydrolase family.

The sequence is that of Protein VdlD (vdlD) from Helicobacter pylori (strain J99 / ATCC 700824) (Campylobacter pylori J99).